Reading from the N-terminus, the 553-residue chain is Zinc finger protein with KRAB and SCAN domains 3 (553 aa).

Residues 28-49 are disordered; sequence EQEESSPLAEETSWLGSPGPDR. 2 positions are modified to phosphoserine: S33 and S44. An SCAN box domain is found at 51 to 133; the sequence is RQRFRAFRYP…ALLEYLDRQL (83 aa). T136 is modified (phosphothreonine). Residue K176 forms a Glycyl lysine isopeptide (Lys-Gly) (interchain with G-Cter in SUMO2) linkage. A Phosphothreonine modification is found at T206. Residues 213-273 enclose the KRAB domain; the sequence is LKMEDVAPVL…RAEEYRDQKP (61 aa). Position 223 is a phosphoserine (S223). 5 consecutive C2H2-type zinc fingers follow at residues 313-335, 341-363, 369-391, 397-419, and 425-447; these read FYCR…KRIH, YECE…QRVH, YECE…QRTH, YECD…HRIH, and YQCN…QRTH. Position 448 is a phosphothreonine (T448). 2 C2H2-type zinc fingers span residues 479-501 and 507-529; these read YQCN…QKVH and FECQ…QRRH.

This sequence belongs to the krueppel C2H2-type zinc-finger protein family. As to expression, expressed in heart, brain, spleen, lung, liver, skeletal muscle, kidney and testis.

Its subcellular location is the nucleus. It localises to the cytoplasm. Transcriptional factor that binds to the consensus sequence 5'-[GT][AG][AGT]GGGG-3' and acts as a repressor of autophagy. Specifically represses expression of genes involved in autophagy and lysosome biogenesis/function such as MAP1LC3B, ULK1 or WIPI2. Associates with chromatin at the ITGB4 and VEGF promoters. The chain is Zinc finger protein with KRAB and SCAN domains 3 (Zkscan3) from Mus musculus (Mouse).